The chain runs to 538 residues: Putative cysteine ligase BshC (538 aa).

Residues 460–484 (KINEQIELLERMLKRNVEKKHEVEL) adopt a coiled-coil conformation.

This sequence belongs to the BshC family.

Involved in bacillithiol (BSH) biosynthesis. May catalyze the last step of the pathway, the addition of cysteine to glucosamine malate (GlcN-Mal) to generate BSH. In Bacillus cereus (strain ZK / E33L), this protein is Putative cysteine ligase BshC.